The following is a 646-amino-acid chain: Rho guanine nucleotide exchange factor 7 (646 aa).

In terms of domain architecture, SH3 spans asparagine 6–proline 65. Residues serine 7, serine 71, and serine 79 each carry the phosphoserine modification. Positions tyrosine 93–valine 273 constitute a DH domain. Positions aspartate 295–lysine 400 constitute a PH domain. Serine 340 bears the Phosphoserine mark. Disordered stretches follow at residues threonine 402–glutamate 464 and lysine 500–phenylalanine 520. The segment covering proline 415 to serine 428 has biased composition (polar residues). Residues lysine 500–glutamate 512 show a composition bias toward basic residues. Phosphoserine occurs at positions 516 and 560.

Interacts with SCRIB; interaction is direct and may play a role in regulation of apoptosis. Interacts with PAK kinases through the SH3 domain. Interacts with GIT1 and probably TGFB1I1. Interacts with ITCH and PARVB. Interacts with FRMPD4 (via N-terminus). Interacts with CaMK1. Interacts with PTK2/FAK1 and RAC1. Interacts with BIN2. Interacts with YWHAZ. Interacts (via PH domain) with NOX1 (via FAD-binding FR-type domain). Post-translationally, phosphorylated on Ser-516 by CaMK1; enhancement of GEF activity and downstream activation of RAC1. Phosphorylated by PTK2/FAK1; this promotes interaction with RAC1.

Its subcellular location is the cell junction. The protein resides in the focal adhesion. The protein localises to the cell projection. It localises to the ruffle. It is found in the cytoplasm. Its subcellular location is the cell cortex. The protein resides in the lamellipodium. In terms of biological role, acts as a RAC1 guanine nucleotide exchange factor (GEF) and can induce membrane ruffling. Functions in cell migration, attachment and cell spreading. Promotes targeting of RAC1 to focal adhesions. May function as a positive regulator of apoptosis. Downstream of NMDA receptors and CaMKK-CaMK1 signaling cascade, promotes the formation of spines and synapses in hippocampal neurons. This is Rho guanine nucleotide exchange factor 7 (Arhgef7) from Rattus norvegicus (Rat).